We begin with the raw amino-acid sequence, 119 residues long: 5-hydroxyisourate hydrolase (119 aa).

His10, Arg48, and Tyr116 together coordinate substrate.

Belongs to the transthyretin family. 5-hydroxyisourate hydrolase subfamily. Homotetramer.

The enzyme catalyses 5-hydroxyisourate + H2O = 5-hydroxy-2-oxo-4-ureido-2,5-dihydro-1H-imidazole-5-carboxylate + H(+). It participates in purine metabolism; urate degradation; (S)-allantoin from urate: step 2/3. Functionally, catalyzes the hydrolysis of 5-hydroxyisourate (HIU) to 2-oxo-4-hydroxy-4-carboxy-5-ureidoimidazoline (OHCU). In Deinococcus radiodurans (strain ATCC 13939 / DSM 20539 / JCM 16871 / CCUG 27074 / LMG 4051 / NBRC 15346 / NCIMB 9279 / VKM B-1422 / R1), this protein is 5-hydroxyisourate hydrolase.